A 344-amino-acid chain; its full sequence is F17d-G fimbrial adhesin (344 aa).

Positions 1-22 are cleaved as a signal peptide; it reads MTNFYKVFLAVFILVCCNISQA. The tract at residues 23 to 199 is receptor-binding lectin domain; sequence AVSFIGSTEN…SLNPFTLNDT (177 aa). Residues 65 to 66, 110 to 111, and 139 to 142 each bind a carbohydrate; these read AN, DT, and STQG. Cys75 and Cys132 are disulfide-bonded. A fimbrillin-binding domain region spans residues 200–344; it reads VTSCRLLTPS…GISTFTFSYQ (145 aa). The disordered stretch occupies residues 288-308; that stretch reads LKFGPDSPVKGNENQWQLSTG. Residues 299 to 308 show a composition bias toward polar residues; the sequence is NENQWQLSTG.

This sequence belongs to the fimbrial protein family.

The protein localises to the fimbrium. Its function is as follows. Essential fimbrial adhesion factor that mediates binding to N-acetylglucosamine-containing receptors in the host intestinal microvilli, leading to colonization of the intestinal tissue, and diarrhea or septicemia. Also confers adhesiveness to laminin and basement membranes. In Escherichia coli, this protein is F17d-G fimbrial adhesin (f17dG).